The sequence spans 764 residues: FHF complex subunit HOOK interacting protein 2A (764 aa).

The segment at 190–236 (SEDGPKGQDPGSGDVSQCQQPQELSGATGVEPTESEEEPPHQMDDLS) is disordered. The span at 203-214 (DVSQCQQPQELS) shows a compositional bias: polar residues.

Belongs to the FHIP family.

Its function is as follows. May be required for proper functioning of the nervous system. This chain is FHF complex subunit HOOK interacting protein 2A, found in Mus musculus (Mouse).